The sequence spans 601 residues: Elongation factor 4 (601 aa).

Residues 5–187 enclose the tr-type G domain; that stretch reads DKIRNFSIIA…SIVKDLPAPQ (183 aa). Residues 17 to 22 and 134 to 137 contribute to the GTP site; these read DHGKST and NKVD.

It belongs to the TRAFAC class translation factor GTPase superfamily. Classic translation factor GTPase family. LepA subfamily.

The protein resides in the cell inner membrane. The catalysed reaction is GTP + H2O = GDP + phosphate + H(+). Its function is as follows. Required for accurate and efficient protein synthesis under certain stress conditions. May act as a fidelity factor of the translation reaction, by catalyzing a one-codon backward translocation of tRNAs on improperly translocated ribosomes. Back-translocation proceeds from a post-translocation (POST) complex to a pre-translocation (PRE) complex, thus giving elongation factor G a second chance to translocate the tRNAs correctly. Binds to ribosomes in a GTP-dependent manner. The protein is Elongation factor 4 of Maridesulfovibrio salexigens (strain ATCC 14822 / DSM 2638 / NCIMB 8403 / VKM B-1763) (Desulfovibrio salexigens).